The primary structure comprises 381 residues: NF-kappa-B inhibitor-like protein 1 (381 aa).

The segment at 1-34 (MSNPSPQVPEEEASTSVCRPKSSMASTSRRQRRE) is disordered. ANK repeat units follow at residues 64–93 (GQPP…DPAH) and 97–133 (HGDT…IKNK). 3 disordered regions span residues 131 to 167 (KNKD…EWRQ), 186 to 242 (GDAS…QEEE), and 256 to 294 (ELRE…RGSL). At serine 150 the chain carries Phosphoserine. Acidic residues predominate over residues 150–159 (SAEEEEEDDA). Residues 256-287 (ELRESRARRAQEALGDREPKPARAGPRAEHPR) are compositionally biased toward basic and acidic residues.

In terms of assembly, interacts with CACTIN (via N-terminal domain); the interaction occurs in a pro-inflammatory-independent manner.

Its subcellular location is the nucleus. Involved in the regulation of innate immune response. Acts as negative regulator of Toll-like receptor and interferon-regulatory factor (IRF) signaling pathways. Contributes to the negative regulation of transcriptional activation of NF-kappa-B target genes in response to endogenous pro-inflammatory stimuli. The sequence is that of NF-kappa-B inhibitor-like protein 1 (NFKBIL1) from Macaca mulatta (Rhesus macaque).